A 250-amino-acid polypeptide reads, in one-letter code: Peptidyl-tRNA hydrolase (250 aa).

Position 14 (Y14) interacts with tRNA. H19 functions as the Proton acceptor in the catalytic mechanism. The tRNA site is built by F64, N66, and N112. The tract at residues 192–250 (MGDGNQRPGGVKTDPAQLEKAPPKAQSHIRQARQNQKKPNIPESGPMAEMLKKLLGKKD) is disordered. Over residues 219-229 (HIRQARQNQKK) the composition is skewed to polar residues. Residues 241 to 250 (MLKKLLGKKD) show a composition bias toward basic and acidic residues.

It belongs to the PTH family. In terms of assembly, monomer.

It localises to the cytoplasm. It carries out the reaction an N-acyl-L-alpha-aminoacyl-tRNA + H2O = an N-acyl-L-amino acid + a tRNA + H(+). Its function is as follows. Hydrolyzes ribosome-free peptidyl-tRNAs (with 1 or more amino acids incorporated), which drop off the ribosome during protein synthesis, or as a result of ribosome stalling. Catalyzes the release of premature peptidyl moieties from peptidyl-tRNA molecules trapped in stalled 50S ribosomal subunits, and thus maintains levels of free tRNAs and 50S ribosomes. The polypeptide is Peptidyl-tRNA hydrolase (Brucella abortus (strain 2308)).